The following is a 495-amino-acid chain: Regulator of G-protein signaling 7 (495 aa).

Positions 37-112 (EKNGIPIRTV…DDGTFYRFQT (76 aa)) constitute a DEP domain. 2 positions are modified to phosphoserine: Ser229 and Ser241. The tract at residues 235–256 (NDIRSHSPTHTPTPETKPPTED) is disordered. The residue at position 243 (Thr243) is a Phosphothreonine. Residues 255–316 (EDELQQQIKY…LSDDTTFWEL (62 aa)) enclose the G protein gamma domain. Positions 333–448 (GMDEALKDPV…IRSSAYQELL (116 aa)) constitute an RGS domain. Ser434 is modified (phosphoserine).

As to quaternary structure, interacts with GNB5, forming the RGS7-GNB5 complex. Interacts with GPR158; promotes the GTPase activator activity of the RGS7-GNB5 complex in absence of glycine, in contrast GTPase activator activity of the RGS7-GNB5 complex is inhibited in presence of glycine. Interacts with GPR179. Interacts with PKD1; this prevents rapid proteasomal degradation. Interacts with RGS7BP, leading to regulate the subcellular location of the heterodimer formed with GNB5. Interacts (phosphorylated form) with 14-3-3 protein YWHAQ. Interacts with SNAPIN. Interacts with GNAI1. Interacts with GNAO1, GNAI3 and GNAZ. Palmitoylated. Post-translationally, ubiquitinated, leading to rapid proteasomal degradation. In terms of processing, phosphorylation and subsequent interaction with 14-3-3 proteins inhibits GAP activity.

The protein localises to the cytoplasm. It is found in the cytosol. It localises to the cell membrane. Its subcellular location is the membrane. GTPase activator component of the RGS7-GNB5 complex that regulates G protein-coupled receptor signaling cascades. The RGS7-GNB5 complex acts as an inhibitor signal transduction by promoting the GTPase activity of G protein alpha subunits, such as GNAO1, thereby driving them into their inactive GDP-bound form. May play a role in synaptic vesicle exocytosis. Glycine-dependent regulation of the RGS7-GNB5 complex by GPR158 affects mood and cognition via its ability to regulate neuronal excitability in L2/L3 pyramidal neurons of the prefrontal cortex. Modulates the activity of potassium channels that are activated by GNAO1 in response to muscarinic acetylcholine receptor M2/CHRM2 signaling. The sequence is that of Regulator of G-protein signaling 7 (RGS7) from Homo sapiens (Human).